Here is a 232-residue protein sequence, read N- to C-terminus: Ribonuclease 3 (232 aa).

One can recognise an RNase III domain in the interval 5–134 (QTVLKNHFAI…FLGALLLDKD (130 aa)). Residue Glu-47 participates in Mg(2+) binding. Asp-51 is a catalytic residue. Residues Asp-120 and Glu-123 each coordinate Mg(2+). Residue Glu-123 is part of the active site. Residues 160–229 (DYKTHLQELL…AKNAVEKGLD (70 aa)) enclose the DRBM domain.

It belongs to the ribonuclease III family. Homodimer. Requires Mg(2+) as cofactor.

Its subcellular location is the cytoplasm. The catalysed reaction is Endonucleolytic cleavage to 5'-phosphomonoester.. Its function is as follows. Digests double-stranded RNA. Involved in the processing of primary rRNA transcript to yield the immediate precursors to the large and small rRNAs (23S and 16S). Processes some mRNAs, and tRNAs when they are encoded in the rRNA operon. Processes pre-crRNA and tracrRNA of type II CRISPR loci if present in the organism. The protein is Ribonuclease 3 of Streptococcus pneumoniae (strain Hungary19A-6).